The sequence spans 757 residues: Elongation factor G, mitochondrial (757 aa).

A mitochondrion-targeting transit peptide spans 1-41; it reads MLERAALLHRLRLPAHSLPFIYNGALFGGAKRSFSATSKRC. One can recognise a tr-type G domain in the interval 66–347; it reads KLLRNIGVSA…AIVDYLPEPS (282 aa). GTP-binding positions include 75–82, 146–150, and 200–203; these read AHIDSGKT, DTPGH, and NKMD.

The protein belongs to the TRAFAC class translation factor GTPase superfamily. Classic translation factor GTPase family. EF-G/EF-2 subfamily.

Its subcellular location is the mitochondrion. It participates in protein biosynthesis; polypeptide chain elongation. Its function is as follows. Mitochondrial GTPase that catalyzes the GTP-dependent ribosomal translocation step during translation elongation. During this step, the ribosome changes from the pre-translocational (PRE) to the post-translocational (POST) state as the newly formed A-site-bound peptidyl-tRNA and P-site-bound deacylated tRNA move to the P and E sites, respectively. Catalyzes the coordinated movement of the two tRNA molecules, the mRNA and conformational changes in the ribosome. The chain is Elongation factor G, mitochondrial from Eremothecium gossypii (strain ATCC 10895 / CBS 109.51 / FGSC 9923 / NRRL Y-1056) (Yeast).